A 426-amino-acid polypeptide reads, in one-letter code: UPF0229 protein YeaH (426 aa).

Residues 78–92 (GNDHFIQNDRIERPQ) show a composition bias toward basic and acidic residues. Residues 78–108 (GNDHFIQNDRIERPQDGGGSGSGNGQASQDG) form a disordered region.

Belongs to the UPF0229 family.

This chain is UPF0229 protein YeaH, found in Salmonella arizonae (strain ATCC BAA-731 / CDC346-86 / RSK2980).